Here is an 810-residue protein sequence, read N- to C-terminus: Plasminogen (810 aa).

Residues 1 to 19 form the signal peptide; that stretch reads MEHKEVVLLLLLFLKSGQG. The region spanning 20-98 is the PAN domain; it reads EPLDDYVNTQ…RDVVLFEKKV (79 aa). Intrachain disulfides connect C49-C73, C53-C61, C103-C181, C124-C164, C152-C176, C185-C262, C188-C316, C206-C245, C234-C257, C275-C352, C296-C335, and C324-C347. Kringle domains follow at residues 103 to 181 and 184 to 262; these read CKTG…ILEC and ECMH…IPRC. A disordered region spans residues 126–145; sequence KWSSTSPHRPRFSPATHPSE. 3 residues coordinate L-lysine: R136, D158, and R172. S268 is a glycosylation site (O-linked (GalNAc...) serine). The Kringle 3 domain occupies 275 to 352; it reads CLKGTGENYR…RWEYCKIPSC (78 aa). N308 is a glycosylation site (N-linked (GlcNAc...) asparagine). T365 carries an O-linked (GalNAc...) threonine glycan. Intrachain disulfides connect C377-C454, C398-C437, C426-C449, C481-C560, C502-C543, C531-C555, C567-C685, C577-C585, and C607-C623. 2 Kringle domains span residues 377-454 and 481-560; these read CYHG…LKKC and CMFG…VPQC. The segment at 396–416 is disordered; it reads KKCQSWSSMTPHRHQKTPENY. L-lysine contacts are provided by D432 and R445. Positions 581-808 constitute a Peptidase S1 domain; the sequence is VVGGCVAHPH…FVTWIEGVMR (228 aa). S597 is modified (phosphoserine). Active-site charge relay system residues include H622 and D665. S688 carries the phosphoserine modification. 3 disulfides stabilise this stretch: C699–C766, C729–C745, and C756–C784. Residue S760 is the Charge relay system of the active site.

It belongs to the peptidase S1 family. Plasminogen subfamily. In terms of assembly, interacts (both mature PLG and the angiostatin peptide) with CSPG4 and AMOT. Interacts (via the Kringle domains) with HRG; the interaction tethers PLG to the cell surface and enhances its activation. Interacts (via Kringle 4 domain) with ADA; the interaction stimulates PLG activation when in complex with DPP4. Angiostatin: Interacts with ATP5F1A; the interaction inhibits most of the angiogenic effects of angiostatin. Interacts (plasmin) with iripin-8, a serine protease inhibitor from Ixodes ricinus saliva. Interacts (plasmin) with iripin-1, a serine protease inhibitor from Ixodes ricinus saliva. Interacts (plasmin) with Kazal-type trypsin inhibitor, a serine protease inhibitor from Aedes aegypti. (Microbial infection) Interacts with C.albicans GPD2; the interaction is direct and provides active plasmin on the surface of fungal cells. As to quaternary structure, (Microbial infection) Interacts with Staphylococcus aureus protein FnbB; this interaction provides active plasmin on the surface of bacterial cells. In terms of assembly, (Microbial infection) Interacts with P.falciparum (strain NF54) enolase ENO (via DKSLVK motif); the interaction occurs at the ookinete cell surface and is required for ookinete invasion of the mosquito midgut. (Microbial infection) Interacts with B.burgdorferi OspC. N-linked glycan contains N-acetyllactosamine and sialic acid. O-linked glycans consist of Gal-GalNAc disaccharide modified with up to 2 sialic acid residues (microheterogeneity). In terms of processing, in the presence of the inhibitor, the activation involves only cleavage after Arg-580, yielding two chains held together by two disulfide bonds. In the absence of the inhibitor, the activation involves additionally the removal of the activation peptide. Post-translationally, (Microbial infection) The Y.pestis Pla protein cleaves between Arg-580 and Val-581, generating plasmin which facilitates bacterial migration and infection. As to expression, present in plasma and many other extracellular fluids. It is synthesized in the liver.

The protein localises to the secreted. The catalysed reaction is Preferential cleavage: Lys-|-Xaa &gt; Arg-|-Xaa, higher selectivity than trypsin. Converts fibrin into soluble products.. With respect to regulation, converted into plasmin by plasminogen activators, both plasminogen and its activator being bound to fibrin. Activated with catalytic amounts of streptokinase. Plasmin activity inhibited by SERPINE2. Functionally, plasmin dissolves the fibrin of blood clots and acts as a proteolytic factor in a variety of other processes including embryonic development, tissue remodeling, tumor invasion, and inflammation. In ovulation, weakens the walls of the Graafian follicle. It activates the urokinase-type plasminogen activator, collagenases and several complement zymogens, such as C1, C4 and C5. Cleavage of fibronectin and laminin leads to cell detachment and apoptosis. Also cleaves fibrin, thrombospondin and von Willebrand factor. Its role in tissue remodeling and tumor invasion may be modulated by CSPG4. Binds to cells. Angiostatin is an angiogenesis inhibitor that blocks neovascularization and growth of experimental primary and metastatic tumors in vivo. Its function is as follows. (Microbial infection) ENO/enoloase from parasite P.falciparum (strain NF54) interacts with PLG present in the mosquito blood meal to promote the invasion of the mosquito midgut by the parasite ookinete. The catalytic active form, plasmin, is essential for the invasion of the mosquito midgut. In terms of biological role, (Microbial infection) Binds to OspC on the surface of B.burgdorferi cells, possibly conferring an extracellular protease activity on the bacteria that allows it to traverse host tissue. Functionally, (Microbial infection) Interacts with dengue virus type 2 particles. Enhances dengue virus type 2 infection in Aedes aegypti mosquito midgut by increasing midgut internalization, resulting in higher infection rates and viral dissemination in mosquitoes. The protein is Plasminogen (PLG) of Homo sapiens (Human).